A 179-amino-acid polypeptide reads, in one-letter code: Interleukin-22b (179 aa).

The N-terminal stretch at 1–33 is a signal peptide; the sequence is MAVLQKSMSFSLMGTLAASCLLLIALWAQEANA. Disulfide bonds link C40/C132 and C89/C178. 3 N-linked (GlcNAc...) asparagine glycosylation sites follow: N54, N68, and N97.

This sequence belongs to the IL-10 family.

The protein localises to the secreted. Its function is as follows. Cytokine that contributes to the inflammatory response in vivo. The polypeptide is Interleukin-22b (Mus musculus (Mouse)).